The primary structure comprises 113 residues: MAKYRKLGRETAHRNLMLRNLVTCLLRSGRIETTVTRAKETRRMAEKMITLAKRGDLHARRQVLAYVMDETVVNNLFTDLAPKYAERNGGYTRIIKIGPRKGDAAEMAFIELV.

Belongs to the bacterial ribosomal protein bL17 family. As to quaternary structure, part of the 50S ribosomal subunit. Contacts protein L32.

The polypeptide is Large ribosomal subunit protein bL17 (Clostridioides difficile (strain 630) (Peptoclostridium difficile)).